A 146-amino-acid polypeptide reads, in one-letter code: VHLTGEEKAAVTSLWGKVNVDEVGGEALGRLLVVYPWTQRFFDSFGDLSSPDAVMGNPKVKAHGKKVLNSFSEGLKNLDNLKGTFAKLSELHCDKLHVDPENFKLLGNVLVCVLAHHFGKEFTPQVQAAYQKVVAGVANALAHKYH.

V1 carries the N-acetylvaline modification. The 145-residue stretch at H2–H146 folds into the Globin domain. Residue T12 is modified to Phosphothreonine. The residue at position 44 (S44) is a Phosphoserine. N6-acetyllysine is present on K59. H63 lines the heme b pocket. An N6-acetyllysine modification is found at K82. H92 lines the heme b pocket. Position 93 is an S-nitrosocysteine (C93). K144 bears the N6-acetyllysine mark.

The protein belongs to the globin family. Heterotetramer of two alpha chains and two beta chains. As to expression, red blood cells.

Functionally, involved in oxygen transport from the lung to the various peripheral tissues. The sequence is that of Hemoglobin subunit beta (HBB) from Lutra lutra (European river otter).